Here is a 563-residue protein sequence, read N- to C-terminus: Inorganic phosphate transporter PT2 (563 aa).

Disordered regions lie at residues 1–51 (MAPR…SGEE) and 67–96 (DGGANGVTYPVGGSRKEQDEISSRGPPAYS). At 1 to 127 (MAPRYHSAAE…NGEKQSLLVP (127 aa)) the chain is on the extracellular side. Residues 128–148 (CLAVFSSNYNFTVTSIALFLM) form a helical membrane-spanning segment. Residues 149 to 168 (NQDPLYKDASDTVVGSSTVK) lie on the Cytoplasmic side of the membrane. The chain crosses the membrane as a helical span at residues 169–189 (MLSYAGAIVGMCTMGYLGDLI). Residues 190–192 (GRR) are Extracellular-facing. Residues 193-213 (LAMILTLALVFIGALLSSICA) traverse the membrane as a helical segment. Topologically, residues 214–217 (WGDG) are cytoplasmic. Residues 218-238 (VTVLVIMGVCRFVLGVGSGGV) form a helical membrane-spanning segment. Residues 239 to 263 (YPLSAVSAAEGAGSEKSNDRSMRVS) are Extracellular-facing. Residues 264-284 (WAYSMNVPGIMFPYIVALVLW) form a helical membrane-spanning segment. Residues 285–291 (CTTHNVD) lie on the Cytoplasmic side of the membrane. A helical membrane pass occupies residues 292–312 (VCFRILLGFGALPALLIWLPA). Residues 313–342 (WRMKEDRAYVAKDFAKHLAGVFVSRSYWRQ) lie on the Extracellular side of the membrane. The chain crosses the membrane as a helical span at residues 343-363 (LLGTGVCWLLYDVTAYGILLV). Over 364 to 380 (QPEITQSIWGNSSSVTD) the chain is Cytoplasmic. A helical transmembrane segment spans residues 381 to 401 (VIWQNIILNGMGIPGCFMGIL). Residues 402–412 (VLKQMGVKWLQ) lie on the Extracellular side of the membrane. The chain crosses the membrane as a helical span at residues 413–433 (FWGFVGLAVSAFLMAATVEIL). Topologically, residues 434–440 (QGKAWAQ) are cytoplasmic. A helical membrane pass occupies residues 441–461 (LVLLCIVNFFINWGASITTFI). Residues 462–477 (LPSLVFPPEVRSTYSG) are Extracellular-facing. A helical membrane pass occupies residues 478 to 498 (ISAALGKIGAVGGIYTMKAIL). Residues 499-504 (STGGLT) are Cytoplasmic-facing. A helical transmembrane segment spans residues 505–525 (PMMICAGVPSLAAAILTWFYV). Topologically, residues 526–563 (DPVPNTLRSSFLQCFGSLAGSCPFIDCRKFRRGSRAFE) are extracellular.

This sequence belongs to the major facilitator superfamily. Phosphate:H(+) symporter (TC 2.A.1.9) family.

The protein resides in the cell membrane. It catalyses the reaction phosphate(in) = phosphate(out). Its function is as follows. Inorganic phosphate transporter. Activity is likely sodium-independent. Exhibits higher activity under acidic pH, implying that either the monovalent form of phosphate is the preferred substrate or the transport activity is H(+)-dependent. In Toxoplasma gondii (strain ATCC 50861 / VEG), this protein is Inorganic phosphate transporter PT2.